The following is a 210-amino-acid chain: DNA replication complex GINS protein PSF3 (210 aa).

It belongs to the GINS3/PSF3 family. Component of the GINS complex which is a heterotetramer of gins1/psf1, gins2/psf2, gins3/psf3 and gins4/sld5. Component of the CMG helicase complex, composed of the mcm2-7 complex, the GINS complex and cdc45.

The protein localises to the nucleus. It localises to the chromosome. Functionally, required for correct functioning of the GINS complex, a complex that plays an essential role in the initiation of DNA replication, and progression of DNA replication forks. GINS complex is a core component of CDC45-MCM-GINS (CMG) helicase, the molecular machine that unwinds template DNA during replication, and around which the replisome is built. The protein is DNA replication complex GINS protein PSF3 of Xenopus laevis (African clawed frog).